A 199-amino-acid chain; its full sequence is GTP cyclohydrolase-2 (199 aa).

49–53 contributes to the GTP binding site; the sequence is RIHSE. C54, C65, and C67 together coordinate Zn(2+). GTP-binding positions include Q70, 92-94, and T114; that span reads EGR. The Proton acceptor role is filled by D126. The active-site Nucleophile is R128. Residues T149 and K154 each coordinate GTP. Residues 172–199 form a disordered region; that stretch reads ETGRNPHNSHYLETKRGKLGHLLEGDSE.

The protein belongs to the GTP cyclohydrolase II family. Zn(2+) is required as a cofactor.

The catalysed reaction is GTP + 4 H2O = 2,5-diamino-6-hydroxy-4-(5-phosphoribosylamino)-pyrimidine + formate + 2 phosphate + 3 H(+). The protein operates within cofactor biosynthesis; riboflavin biosynthesis; 5-amino-6-(D-ribitylamino)uracil from GTP: step 1/4. Functionally, catalyzes the conversion of GTP to 2,5-diamino-6-ribosylamino-4(3H)-pyrimidinone 5'-phosphate (DARP), formate and pyrophosphate. The chain is GTP cyclohydrolase-2 from Teredinibacter turnerae (strain ATCC 39867 / T7901).